We begin with the raw amino-acid sequence, 162 residues long: Cytochrome c-type biogenesis protein CcmE (162 aa).

Residues 1–8 are Cytoplasmic-facing; sequence MNPRRKKR. Residues 9–29 traverse the membrane as a helical; Signal-anchor for type II membrane protein segment; the sequence is LALVVGLIGGVAAVASLLLYA. The Periplasmic portion of the chain corresponds to 30 to 162; that stretch reads LNTNLNLFYT…YTETQKGGSR (133 aa). Residues His-131 and Tyr-135 each coordinate heme.

Belongs to the CcmE/CycJ family.

Its subcellular location is the cell inner membrane. Its function is as follows. Heme chaperone required for the biogenesis of c-type cytochromes. Transiently binds heme delivered by CcmC and transfers the heme to apo-cytochromes in a process facilitated by CcmF and CcmH. This chain is Cytochrome c-type biogenesis protein CcmE, found in Shewanella amazonensis (strain ATCC BAA-1098 / SB2B).